A 418-amino-acid polypeptide reads, in one-letter code: Metal tolerance protein 1 (418 aa).

At 1–56 (MDSHNSAPPQIAEVRMDISSSTSVAAGNKVCRGAACDFSDSSNSSKDARERMASMR) the chain is on the cytoplasmic side. Residues 57-77 (KLIIAVILCIIFMAVEVVGGI) traverse the membrane as a helical segment. Residues 78–89 (KANSLAILTDAA) are Vacuolar-facing. Residues 90-110 (HLLSDVAAFAISLFSLWAAGW) traverse the membrane as a helical segment. Residues 111–122 (EATPQQSYGFFR) lie on the Cytoplasmic side of the membrane. Residues 123–143 (IEILGALVSIQLIWLLAGILV) form a helical membrane-spanning segment. The Vacuolar portion of the chain corresponds to 144-160 (YEAIVRLINESGEVQGS). The chain crosses the membrane as a helical span at residues 161-181 (LMFAVSAFGLFVNIIMAVLLG). Positions 182–246 (HDHGHGHGHG…HHPGTGHHHH (65 aa)) are required for zinc-binding. Topologically, residues 182–282 (HDHGHGHGHG…RRNINVHSAY (101 aa)) are cytoplasmic. The disordered stretch occupies residues 186 to 248 (HGHGHGHGHG…PGTGHHHHDA (63 aa)). A compositionally biased stretch (basic and acidic residues) spans 196 to 227 (HSHDHDHGGSDHDHHHHEDQEHGHVHHHEDGH). The segment covering 235 to 245 (LHHHPGTGHHH) has biased composition (basic residues). Residues 283–303 (LHVLGDSIQSIGVMIGGAIIW) form a helical membrane-spanning segment. The Vacuolar segment spans residues 304 to 307 (YKPE). Residues 308–328 (WKIIDLICTLIFSVIVLFTTI) traverse the membrane as a helical segment. Over 329 to 418 (KMLRNILEVL…SHVTIQIERE (90 aa)) the chain is Cytoplasmic.

The protein belongs to the cation diffusion facilitator (CDF) transporter (TC 2.A.4) family. SLC30A subfamily.

Its subcellular location is the vacuole membrane. Functionally, involved in sequestration of excess zinc in the cytoplasm into vacuoles to maintain zinc homeostasis. The sequence is that of Metal tolerance protein 1 (MTP1) from Oryza sativa subsp. japonica (Rice).